A 231-amino-acid polypeptide reads, in one-letter code: Orotidine 5'-phosphate decarboxylase (231 aa).

Substrate-binding positions include Asp11, Lys34, 61–70, Thr117, Arg179, Gln188, Gly208, and Arg209; that span reads DLKLHDIPNT. Residue Lys63 is the Proton donor of the active site.

This sequence belongs to the OMP decarboxylase family. Type 1 subfamily. Homodimer.

It carries out the reaction orotidine 5'-phosphate + H(+) = UMP + CO2. Its pathway is pyrimidine metabolism; UMP biosynthesis via de novo pathway; UMP from orotate: step 2/2. Its function is as follows. Catalyzes the decarboxylation of orotidine 5'-monophosphate (OMP) to uridine 5'-monophosphate (UMP). This Streptococcus thermophilus (strain CNRZ 1066) protein is Orotidine 5'-phosphate decarboxylase.